The sequence spans 321 residues: Collectin-43 (321 aa).

Residues 1 to 20 (MLPLPLSILLLLTQSQSFLG) form the signal peptide. The interval 43–163 (PADSLRGHDG…GEKGARGETS (121 aa)) is disordered. Residues 47-65 (LRGHDGRDGKEGPQGEKGD) are compositionally biased toward basic and acidic residues. In terms of domain architecture, Collagen-like spans 49–162 (GHDGRDGKEG…PGEKGARGET (114 aa)). Gly residues-rich tracts occupy residues 100–109 (GPEGGVGAPG) and 124–133 (GTPGPGGAIG). The span at 147 to 159 (KGDRGDPGEKGAR) shows a compositional bias: basic and acidic residues. The region spanning 222-321 (QLCREAKGQL…REERLVICEF (100 aa)) is the C-type lectin domain. 2 cysteine pairs are disulfide-bonded: Cys224–Cys319 and Cys297–Cys311.

It belongs to the SFTPD family. In terms of assembly, oligomeric complex of 4 set of homotrimers. Post-translationally, hydroxylated. As to expression, liver specific.

The protein resides in the secreted. Its function is as follows. Lectin that binds to various sugars: mannose = ManNAc &gt; fucose &gt; GlcNAc &gt; glucose = maltose &gt; galactose &gt; lactose &gt; GalNAc. Could play a role in immune defense. In Bos taurus (Bovine), this protein is Collectin-43 (CL43).